The primary structure comprises 72 residues: Putative sodium channel toxin Ts18 (72 aa).

A signal peptide spans 1–21; sequence MNFRFPFLLMITISLIGAVLT. 3 disulfide bridges follow: Cys38/Cys61, Cys47/Cys66, and Cys51/Cys68.

The protein belongs to the long (3 C-C) scorpion toxin superfamily. In terms of tissue distribution, expressed by the venom gland.

Its subcellular location is the secreted. Functionally, binds to sodium channels (Nav) and affects the channel activation process. In Tityus serrulatus (Brazilian scorpion), this protein is Putative sodium channel toxin Ts18.